The chain runs to 475 residues: FAD-dependent monooxygenase janM (475 aa).

A helical transmembrane segment spans residues 8–24 (VIIVGGSIGGLTLAHCL). FAD is bound by residues glutamate 35, glycine 49, and arginine 108. An N-linked (GlcNAc...) asparagine glycan is attached at asparagine 147. Positions 299 and 312 each coordinate FAD. A helical membrane pass occupies residues 432-451 (GWRFHAMLCILMLAILYTWV).

Belongs to the paxM FAD-dependent monooxygenase family. The cofactor is FAD.

The protein resides in the membrane. It functions in the pathway secondary metabolite biosynthesis. Functionally, FAD-dependent monooxygenase; part of the gene cluster that mediates the biosynthesis of the indole diterpenes janthitremanes such as shearinine K or shearinine A. The geranylgeranyl diphosphate (GGPP) synthase janG catalyzes the first step in janthitremane biosynthesis via conversion of farnesyl pyrophosphate and isopentyl pyrophosphate into geranylgeranyl pyrophosphate (GGPP). Condensation of indole-3-glycerol phosphate with GGPP by the prenyl transferase janC then forms 3-geranylgeranylindole (3-GGI). Epoxidation by the FAD-dependent monooxygenase janM leads to a epoxidized-GGI that is substrate of the terpene cyclase janB for cyclization to yield paspaline. Paspaline is subsequently converted to 13-desoxypaspaline by the cytochrome P450 monooxygenase janP, via beta-PC-M6 in a series of alpha-face oxidations. The cytochrome P450 monooxygenase janQ is proposed to carry out sequential beta-face oxidation steps at C-7 and C-13 of 13-desoxypaspaline to form paspalicine and paspalinine respectively. The indole diterpene prenyltransferase janD may then convert paspalinine into shearinine K which is substrate of janO and/or additional enzymes for oxidation and cyclization to generate shearinine A. The protein is FAD-dependent monooxygenase janM of Penicillium janthinellum (Penicillium vitale).